The sequence spans 101 residues: NADH-quinone oxidoreductase subunit K (101 aa).

Helical transmembrane passes span 4-24, 30-50, and 61-81; these read LAHY…GIFL, IIIL…FVAF, and IFVF…LAIL.

The protein belongs to the complex I subunit 4L family. As to quaternary structure, NDH-1 is composed of 14 different subunits. Subunits NuoA, H, J, K, L, M, N constitute the membrane sector of the complex.

The protein localises to the cell inner membrane. The enzyme catalyses a quinone + NADH + 5 H(+)(in) = a quinol + NAD(+) + 4 H(+)(out). NDH-1 shuttles electrons from NADH, via FMN and iron-sulfur (Fe-S) centers, to quinones in the respiratory chain. The immediate electron acceptor for the enzyme in this species is believed to be ubiquinone. Couples the redox reaction to proton translocation (for every two electrons transferred, four hydrogen ions are translocated across the cytoplasmic membrane), and thus conserves the redox energy in a proton gradient. The protein is NADH-quinone oxidoreductase subunit K of Paraburkholderia phymatum (strain DSM 17167 / CIP 108236 / LMG 21445 / STM815) (Burkholderia phymatum).